We begin with the raw amino-acid sequence, 575 residues long: Potassium-transporting ATPase potassium-binding subunit (575 aa).

12 consecutive transmembrane segments (helical) span residues 3 to 23, 69 to 89, 136 to 156, 178 to 198, 266 to 286, 293 to 313, 340 to 360, 367 to 387, 391 to 411, 431 to 451, 498 to 518, and 543 to 563; these read FEGV…VPFF, AVLA…LLQG, CFQF…IAFI, ILMP…VPQS, LLEI…FGVL, GWVL…VAAL, FGWA…TGAV, LTPL…IWGG, GIAY…LMVG, IIFL…LAIP, VVLL…AGGL, and AGTI…LGPI.

Belongs to the KdpA family. The system is composed of three essential subunits: KdpA, KdpB and KdpC.

The protein resides in the cell inner membrane. Functionally, part of the high-affinity ATP-driven potassium transport (or Kdp) system, which catalyzes the hydrolysis of ATP coupled with the electrogenic transport of potassium into the cytoplasm. This subunit binds the periplasmic potassium ions and delivers the ions to the membrane domain of KdpB through an intramembrane tunnel. The sequence is that of Potassium-transporting ATPase potassium-binding subunit from Gloeobacter violaceus (strain ATCC 29082 / PCC 7421).